We begin with the raw amino-acid sequence, 205 residues long: MYDQSVSSYLQNLNSFVQQQAIHIQQLERQLKEIQTEMNTMKQRPATTIERVEYKFDQLKIERLDGTLNIGLNPTDPNSVQNFDVSQSTPQIGMMQQEESAQLMQQIRQNVDMYLTEEIPDILEQLENQYDSRLDDTNRHHVIEDIRKQMDSRIHYYMSHIKKEENTPPAQYAEHIAEHVKRDVIRAVEHFLEHIPSEMKGDEQA.

Its function is as follows. Required for the formation of functionally normal spores. Could be involved in the establishment of normal spore coat structure and/or permeability, which allows the access of germinants to their receptor. This chain is Probable spore germination protein GerPC (gerPC), found in Bacillus subtilis (strain 168).